The sequence spans 129 residues: Venom CUB domain-containing protein 1 (129 aa).

The signal sequence occupies residues 1–18 (MKLLGVLITIYCIASTLA). One can recognise a CUB domain in the interval 19–121 (IDVNVPSNGM…KASCKAYSIT (103 aa)). An intrachain disulfide couples cysteine 66 to cysteine 83.

Belongs to the venom CUB family. In terms of processing, contains 2 disulfide bonds. In terms of tissue distribution, expressed by the venom gland.

It localises to the secreted. This Platymeris rhadamanthus (Red spot assassin bug) protein is Venom CUB domain-containing protein 1.